Consider the following 154-residue polypeptide: Ribonuclease H (154 aa).

Positions 1–142 (MLKQITLYTD…CDELARNAAL (142 aa)) constitute an RNase H type-1 domain. Mg(2+)-binding residues include Asp10, Glu48, Asp70, and Asp134.

It belongs to the RNase H family. In terms of assembly, monomer. Mg(2+) is required as a cofactor.

It is found in the cytoplasm. It catalyses the reaction Endonucleolytic cleavage to 5'-phosphomonoester.. In terms of biological role, endonuclease that specifically degrades the RNA of RNA-DNA hybrids. The chain is Ribonuclease H from Tolumonas auensis (strain DSM 9187 / NBRC 110442 / TA 4).